A 365-amino-acid polypeptide reads, in one-letter code: Succinyl-diaminopimelate desuccinylase (365 aa).

Histidine 65 serves as a coordination point for Zn(2+). Aspartate 67 is a catalytic residue. Aspartate 96 lines the Zn(2+) pocket. The active-site Proton acceptor is the glutamate 126. Residues glutamate 127, glutamate 155, and histidine 340 each contribute to the Zn(2+) site.

Belongs to the peptidase M20A family. DapE subfamily. Homodimer. Zn(2+) serves as cofactor. It depends on Co(2+) as a cofactor.

The enzyme catalyses N-succinyl-(2S,6S)-2,6-diaminopimelate + H2O = (2S,6S)-2,6-diaminopimelate + succinate. It participates in amino-acid biosynthesis; L-lysine biosynthesis via DAP pathway; LL-2,6-diaminopimelate from (S)-tetrahydrodipicolinate (succinylase route): step 3/3. Its function is as follows. Catalyzes the hydrolysis of N-succinyl-L,L-diaminopimelic acid (SDAP), forming succinate and LL-2,6-diaminopimelate (DAP), an intermediate involved in the bacterial biosynthesis of lysine and meso-diaminopimelic acid, an essential component of bacterial cell walls. This Campylobacter jejuni subsp. jejuni serotype O:6 (strain 81116 / NCTC 11828) protein is Succinyl-diaminopimelate desuccinylase.